The chain runs to 92 residues: MARSLKKGPFVDDHLMSKIAKLNETEQKQVVKTWSRRSTIFPQFIGHTIAVYDGRKHVPVYVTEDMVGHKLGEFAPTRTYKGHDADDKKTRR.

It belongs to the universal ribosomal protein uS19 family.

Protein S19 forms a complex with S13 that binds strongly to the 16S ribosomal RNA. This Bacillus thuringiensis subsp. konkukian (strain 97-27) protein is Small ribosomal subunit protein uS19.